Reading from the N-terminus, the 183-residue chain is Inner membrane-spanning protein YciB (183 aa).

A run of 5 helical transmembrane segments spans residues 4-24 (FIEF…DIYM), 50-70 (MQLF…FFHD), 72-92 (TFIK…LLIS), 119-139 (VNLG…YVAF), and 149-169 (FKVF…GVYL).

Belongs to the YciB family.

The protein localises to the cell inner membrane. In terms of biological role, plays a role in cell envelope biogenesis, maintenance of cell envelope integrity and membrane homeostasis. This is Inner membrane-spanning protein YciB from Aeromonas hydrophila subsp. hydrophila (strain ATCC 7966 / DSM 30187 / BCRC 13018 / CCUG 14551 / JCM 1027 / KCTC 2358 / NCIMB 9240 / NCTC 8049).